The following is a 92-amino-acid chain: Putative membrane protein insertion efficiency factor (92 aa).

This sequence belongs to the UPF0161 family.

It localises to the cell inner membrane. Functionally, could be involved in insertion of integral membrane proteins into the membrane. This Synechococcus sp. (strain CC9902) protein is Putative membrane protein insertion efficiency factor.